Consider the following 70-residue polypeptide: MKAIIFFCFLSVMVFIVAEASSLEALKIFEGERECVGENGHCRSWYNDCCDGYYCSCMQPPNCICRNNNG.

The first 20 residues, 1 to 20, serve as a signal peptide directing secretion; it reads MKAIIFFCFLSVMVFIVAEA. The propeptide occupies 21 to 33; sequence SSLEALKIFEGER. Intrachain disulfides connect Cys-35/Cys-50, Cys-42/Cys-55, Cys-49/Cys-65, and Cys-57/Cys-63. The residue at position 69 (Asn-69) is an Asparagine amide.

It belongs to the neurotoxin 07 (Beta/delta-agtx) family. 04 (aga-5) subfamily. Expressed by the venom gland.

It localises to the secreted. Its function is as follows. Insecticidal neurotoxin that modulates the insect Nav channel (DmNaV1/tipE (para/tipE)) in a unique manner, with both the activation and inactivation processes being affected. The voltage dependence of activation is shifted toward more hyperpolarized potentials (analogous to site 4 toxins) and a non-inactivating persistent sodium current is induced (site 3-like action). Interestingly, both effects take place in a voltage-dependent manner, producing a bell-shaped curve between -80 and 0 mV. This Agelena orientalis (Funnel-web spider) protein is Mu-agatoxin-Ao1b.